The chain runs to 211 residues: Endonuclease III (211 aa).

One can recognise a HhH domain in the interval 111–130; the sequence is AHALESLPGVGHKTANVVLN. Positions 190, 197, 200, and 206 each coordinate [4Fe-4S] cluster.

Belongs to the Nth/MutY family. [4Fe-4S] cluster is required as a cofactor.

The enzyme catalyses 2'-deoxyribonucleotide-(2'-deoxyribose 5'-phosphate)-2'-deoxyribonucleotide-DNA = a 3'-end 2'-deoxyribonucleotide-(2,3-dehydro-2,3-deoxyribose 5'-phosphate)-DNA + a 5'-end 5'-phospho-2'-deoxyribonucleoside-DNA + H(+). In terms of biological role, DNA repair enzyme that has both DNA N-glycosylase activity and AP-lyase activity. The DNA N-glycosylase activity releases various damaged pyrimidines from DNA by cleaving the N-glycosidic bond, leaving an AP (apurinic/apyrimidinic) site. The AP-lyase activity cleaves the phosphodiester bond 3' to the AP site by a beta-elimination, leaving a 3'-terminal unsaturated sugar and a product with a terminal 5'-phosphate. This Treponema pallidum (strain Nichols) protein is Endonuclease III.